A 444-amino-acid chain; its full sequence is 23S rRNA (uracil(1939)-C(5))-methyltransferase RlmD (444 aa).

In terms of domain architecture, TRAM spans Arg5–Glu67. Residues Cys80, Cys86, Cys89, and Cys168 each contribute to the [4Fe-4S] cluster site. S-adenosyl-L-methionine-binding residues include Gln276, Phe305, Asn310, Glu326, Asp353, and Asp374. The active-site Nucleophile is Cys400.

It belongs to the class I-like SAM-binding methyltransferase superfamily. RNA M5U methyltransferase family. RlmD subfamily.

It catalyses the reaction uridine(1939) in 23S rRNA + S-adenosyl-L-methionine = 5-methyluridine(1939) in 23S rRNA + S-adenosyl-L-homocysteine + H(+). In terms of biological role, catalyzes the formation of 5-methyl-uridine at position 1939 (m5U1939) in 23S rRNA. The protein is 23S rRNA (uracil(1939)-C(5))-methyltransferase RlmD of Xanthomonas oryzae pv. oryzae (strain KACC10331 / KXO85).